We begin with the raw amino-acid sequence, 343 residues long: Sodium/bile acid cotransporter 7-A (343 aa).

The Cytoplasmic portion of the chain corresponds to 1-10; the sequence is MGLLERLRKE. A helical transmembrane segment spans residues 11-31; that stretch reads WFIVGIILVIAAAKLEPTVGV. At 32-37 the chain is on the extracellular side; that stretch reads KGGPLK. A helical membrane pass occupies residues 38–58; that stretch reads PEITITYIAVSAIFFNSGLSL. The Cytoplasmic portion of the chain corresponds to 59–71; it reads KTEELTNALMHVK. A helical membrane pass occupies residues 72–92; sequence LHLFVQLFTLVFFPTAIWLFL. The Extracellular portion of the chain corresponds to 93 to 116; the sequence is QVLSLTPINEWLLKGLQTVSCMPP. Residues 117-137 form a helical membrane-spanning segment; it reads PVSSAVILTKAVGGNEAAAIF. N138 is a topological domain (cytoplasmic). A helical membrane pass occupies residues 139-159; the sequence is SAFGSFLGIVVTPLLLLLFLG. Topologically, residues 160–163 are extracellular; the sequence is SSSS. The chain crosses the membrane as a helical span at residues 164 to 184; that stretch reads VPFTSIFSQLFMTVVVPLIIG. Residues 185–201 lie on the Cytoplasmic side of the membrane; sequence QIVRRYIKDWLERKKPP. A helical transmembrane segment spans residues 202-222; it reads FGAISSCVLLMIIYTTFCDTF. Residues 223–234 lie on the Extracellular side of the membrane; it reads SNPNIDLDTFSL. Residues 235–255 traverse the membrane as a helical segment; that stretch reads VVIVFIIFFIQLAFMLLTFLF. Over 256–270 the chain is Cytoplasmic; that stretch reads STSKNSGFTPADTVA. Residues 271-291 form a helical membrane-spanning segment; it reads IVFCSTHKSLTLGIPMLKIVF. Residues 292 to 298 lie on the Extracellular side of the membrane; the sequence is VGYEHLS. A helical membrane pass occupies residues 299–319; sequence LISVPLLIYHPAQILLGSVLV. At 320 to 343 the chain is on the cytoplasmic side; it reads PTIKSWMLSRQKALKLTRQPKIPL.

Belongs to the bile acid:sodium symporter (BASS) (TC 2.A.28) family. In terms of tissue distribution, strongly expressed in small intestine. Moderately expressed in spleen. Weakly expressed in skeletal muscle. Not detected in other tissues tested.

It is found in the cell membrane. The protein resides in the endoplasmic reticulum membrane. Its subcellular location is the golgi apparatus membrane. Its function is as follows. Involved in teeth and skeletal development. Has an essential role in the biosynthesis and trafficking of glycosaminoglycans and glycoproteins to produce a proper functioning extracellular matrix. Required for extracellular matrix mineralization. Also involved in the regulation of cellular calcium homeostasis. Does not show transport activity towards bile acids or steroid sulfates. In Xenopus laevis (African clawed frog), this protein is Sodium/bile acid cotransporter 7-A (slc10a7-a).